Reading from the N-terminus, the 61-residue chain is Alpha-conotoxin CnIJ (61 aa).

The signal sequence occupies residues 1-17 (MMFTVFLLVVLTTTVVS). The propeptide occupies 18–44 (FPSDSASDGRDDEAKDERSDMYELKRN). Intrachain disulfides connect cysteine 47–cysteine 52 and cysteine 48–cysteine 59. Position 59 is a cysteine amide (cysteine 59).

This sequence belongs to the conotoxin A superfamily. As to expression, expressed by the venom duct.

It localises to the secreted. This chain is Alpha-conotoxin CnIJ, found in Conus consors (Singed cone).